The primary structure comprises 401 residues: uncharacterized protein (401 aa).

Lys-242 bears the N6-(pyridoxal phosphate)lysine mark.

It belongs to the class-I pyridoxal-phosphate-dependent aminotransferase family. In terms of assembly, homodimer. Pyridoxal 5'-phosphate serves as cofactor.

The protein resides in the cytoplasm. This is an uncharacterized protein from Saccharolobus solfataricus (strain ATCC 35092 / DSM 1617 / JCM 11322 / P2) (Sulfolobus solfataricus).